The chain runs to 109 residues: Tetraspanin-31 (109 aa).

At 1 to 12 (MVCGGFACSKNA) the chain is on the cytoplasmic side. The helical transmembrane segment at 13-33 (LCALNVVYMLVGLLLIGVAAW) threads the bilayer. Residues 34-44 (AKGLGLVSSIH) are Extracellular-facing. A helical transmembrane segment spans residues 45 to 65 (IIGGVIAVGVFLLLIAVAGLV). Over 66–72 (GAVNHHQ) the chain is Cytoplasmic. Residues 73-93 (VLLFFYMIILGLVFIFQFGIS) traverse the membrane as a helical segment. Topologically, residues 94-109 (CSCLAINLSKQAGIIN) are extracellular. Asparagine 100 carries N-linked (GlcNAc...) asparagine glycosylation.

It belongs to the tetraspanin (TM4SF) family.

The protein localises to the membrane. The chain is Tetraspanin-31 (TSPAN31) from Sus scrofa (Pig).